The chain runs to 139 residues: uncharacterized protein (139 aa).

It to E.coli YecT.

This is an uncharacterized protein from Rhizobium meliloti (strain 1021) (Ensifer meliloti).